We begin with the raw amino-acid sequence, 177 residues long: Novel acetylcholine receptor chaperone (177 aa).

Residues 1-5 (MASPR) are Cytoplasmic-facing. A helical membrane pass occupies residues 6–26 (TVTVVALSVALGLFFVFMGTI). Residues 27-61 (KLTPRLSKDAYSEMKRAYKSYVRALPLLKKMGINS) are Lumenal-facing. The interval 43 to 54 (AYKSYVRALPLL) is interaction with NGFR. The helical transmembrane segment at 62–82 (ILLRKSIGALEVACGIVMTLV) threads the bilayer. Residues 83–88 (PGRPKD) lie on the Cytoplasmic side of the membrane. Residues 89–109 (VANFFLLLLVLAVLFFHQLVG) form a helical membrane-spanning segment. The Lumenal portion of the chain corresponds to 110 to 114 (DPLKR). A helical transmembrane segment spans residues 115 to 132 (YAHALVFGILLTCRLLIA). The Cytoplasmic portion of the chain corresponds to 133–177 (RKPEDRSSEKKSSPPGNAGSDGNAGNTEEQPSLYEKAPQGKMKLS). Residues 136–177 (EDRSSEKKSSPPGNAGSDGNAGNTEEQPSLYEKAPQGKMKLS) form a disordered region.

This sequence belongs to the DoxX family. As to quaternary structure, may interact with NGFR. Interacts with RPN1, RPN2 and CANX.

The protein resides in the peroxisome membrane. The protein localises to the cytoplasmic vesicle. It localises to the endoplasmic reticulum membrane. Functionally, molecular chaperone which mediates the proper assembly and functional expression of the nicotinic acetylcholine receptors (nAChRs) throughout the brain. Essential for the proper folding, assembly, function and surface trafficking of alpha-7 (CHRNA7), alpha-4-beta-2, alpha-3-beta-2 and alpha-3-beta-4 receptors. Stably associates with ribophorin-1 (RPN1) and ribophorin-2 (RPN2) (components of the oligosaccharyl transferase (OST) complex) and with calnexin (CANX), both of which are critical for NACHO-mediated effects on CHRNA7 assembly and function. Facilitates the proper folding and assembly of alpha-6-beta-2 and alpha-6-beta-2-beta-3 receptors and acts at early stages of the nAChRs subunit assembly. Promotes the expression of the alpha-4(2):beta-2(3) stoichiometric form over the alpha-4(3):beta-2(2) form. The protein is Novel acetylcholine receptor chaperone (TMEM35A) of Bos taurus (Bovine).